The chain runs to 305 residues: Orotidine 5'-phosphate decarboxylase (305 aa).

Lys-108 functions as the Proton donor in the catalytic mechanism.

It belongs to the OMP decarboxylase family. Type 2 subfamily.

The enzyme catalyses orotidine 5'-phosphate + H(+) = UMP + CO2. It functions in the pathway pyrimidine metabolism; UMP biosynthesis via de novo pathway; UMP from orotate: step 2/2. The polypeptide is Orotidine 5'-phosphate decarboxylase (Caldicellulosiruptor bescii (strain ATCC BAA-1888 / DSM 6725 / KCTC 15123 / Z-1320) (Anaerocellum thermophilum)).